A 345-amino-acid polypeptide reads, in one-letter code: Anthranilate phosphoribosyltransferase (345 aa).

5-phospho-alpha-D-ribose 1-diphosphate contacts are provided by residues Gly-80, 83–84, Thr-88, 90–93, 108–116, and Ser-120; these read GD, NIST, and KHGNRSVSS. Anthranilate is bound at residue Gly-80. Ser-92 contributes to the Mg(2+) binding site. Asn-111 lines the anthranilate pocket. An anthranilate-binding site is contributed by Arg-166. 2 residues coordinate Mg(2+): Asp-225 and Glu-226.

Belongs to the anthranilate phosphoribosyltransferase family. Homodimer. The cofactor is Mg(2+).

The enzyme catalyses N-(5-phospho-beta-D-ribosyl)anthranilate + diphosphate = 5-phospho-alpha-D-ribose 1-diphosphate + anthranilate. It functions in the pathway amino-acid biosynthesis; L-tryptophan biosynthesis; L-tryptophan from chorismate: step 2/5. Its function is as follows. Catalyzes the transfer of the phosphoribosyl group of 5-phosphorylribose-1-pyrophosphate (PRPP) to anthranilate to yield N-(5'-phosphoribosyl)-anthranilate (PRA). The sequence is that of Anthranilate phosphoribosyltransferase from Acetivibrio thermocellus (strain ATCC 27405 / DSM 1237 / JCM 9322 / NBRC 103400 / NCIMB 10682 / NRRL B-4536 / VPI 7372) (Clostridium thermocellum).